The following is a 79-amino-acid chain: Putative membrane protein insertion efficiency factor (79 aa).

This sequence belongs to the UPF0161 family.

The protein localises to the cell inner membrane. Its function is as follows. Could be involved in insertion of integral membrane proteins into the membrane. This chain is Putative membrane protein insertion efficiency factor, found in Prochlorococcus marinus (strain SARG / CCMP1375 / SS120).